The sequence spans 111 residues: PHD finger-like domain-containing protein 5A (111 aa).

This sequence belongs to the PHF5 family.

The chain is PHD finger-like domain-containing protein 5A from Drosophila melanogaster (Fruit fly).